Reading from the N-terminus, the 234-residue chain is Putative lipoyltransferase 2, mitochondrial (234 aa).

The transit peptide at 1–28 directs the protein to the mitochondrion; that stretch reads MPFVRPLVTVVRAGRHSYSAGLQLQQRL. One can recognise a BPL/LPL catalytic domain in the interval 39-220; the sequence is AEFRNYLVLQ…SFAKVFECRL (182 aa). Substrate is bound by residues 83–90, 150–152, and 163–165; these read RGGLITFH, AIG, and GIG. Cys181 (acyl-thioester intermediate) is an active-site residue.

It belongs to the LipB family.

The protein resides in the mitochondrion. It catalyses the reaction octanoyl-[ACP] + L-lysyl-[protein] = N(6)-octanoyl-L-lysyl-[protein] + holo-[ACP] + H(+). Its pathway is protein modification; protein lipoylation via endogenous pathway; protein N(6)-(lipoyl)lysine from octanoyl-[acyl-carrier-protein]: step 1/2. Functionally, catalyzes the transfer of endogenously produced octanoic acid from octanoyl-acyl-carrier-protein onto the lipoyl domains of lipoate-dependent enzymes. Lipoyl-ACP can also act as a substrate although octanoyl-ACP is likely to be the physiological substrate. The polypeptide is Putative lipoyltransferase 2, mitochondrial (Drosophila melanogaster (Fruit fly)).